The primary structure comprises 149 residues: Ribosome-binding factor A (149 aa).

The segment at 123-149 (LAKLREGAAPAGDADPYKTSSKSESEE) is disordered.

The protein belongs to the RbfA family. Monomer. Binds 30S ribosomal subunits, but not 50S ribosomal subunits or 70S ribosomes.

The protein resides in the cytoplasm. One of several proteins that assist in the late maturation steps of the functional core of the 30S ribosomal subunit. Associates with free 30S ribosomal subunits (but not with 30S subunits that are part of 70S ribosomes or polysomes). Required for efficient processing of 16S rRNA. May interact with the 5'-terminal helix region of 16S rRNA. The protein is Ribosome-binding factor A of Corynebacterium glutamicum (strain ATCC 13032 / DSM 20300 / JCM 1318 / BCRC 11384 / CCUG 27702 / LMG 3730 / NBRC 12168 / NCIMB 10025 / NRRL B-2784 / 534).